The following is a 310-amino-acid chain: Olfactory receptor 9Q1 (310 aa).

Residues 1–25 (MAEMNLTLVTEFLLIAFTEYPEWAL) are Extracellular-facing. A glycan (N-linked (GlcNAc...) asparagine) is linked at asparagine 5. The helical transmembrane segment at 26–46 (PLFLLFLFMYLITVLGNLEMI) threads the bilayer. The Cytoplasmic segment spans residues 47–54 (ILILMDHQ). Residues 55 to 75 (LHAPMYFLLSHLAFMDVCYSS) form a helical membrane-spanning segment. Over 76-99 (ITVPQMLAVLLEHGAALSYTRCAA) the chain is Extracellular. The cysteines at positions 97 and 189 are disulfide-linked. A helical membrane pass occupies residues 100–120 (QFFLFTFFGSIDCYLLALMAY). At 121 to 139 (DRYLAVCQPLLYVTILTQQ) the chain is on the cytoplasmic side. Residues 140–160 (ARLSLVAGAYVAGLISALVRT) form a helical membrane-spanning segment. Residues 161-197 (VSAFTLSFCGTSEIDFIFCDLPPLLKLTCGESYTQEV) are Extracellular-facing. Residues 198–217 (LIIMFAIFVIPASMVVILVS) form a helical membrane-spanning segment. Residues 218–236 (YLFIIVAIMGIPAGSQAKT) are Cytoplasmic-facing. A helical transmembrane segment spans residues 237-257 (FSTCTSHLTAVSLFFGTLIFM). The Extracellular portion of the chain corresponds to 258–270 (YLRGNSDQSSEKN). Residues 271–291 (RVVSVLYTEVIPMLNPLIYSL) form a helical membrane-spanning segment. The Cytoplasmic segment spans residues 292–310 (RNKEVKEALRKILNRAKLS).

It belongs to the G-protein coupled receptor 1 family.

It localises to the cell membrane. Functionally, odorant receptor. This chain is Olfactory receptor 9Q1 (OR9Q1), found in Homo sapiens (Human).